The following is a 450-amino-acid chain: Methionine aminopeptidase 2 (450 aa).

A disordered region spans residues 1 to 99 (MAVQAPEVDK…LFPNSQYPEG (99 aa)). Acidic residues predominate over residues 33–49 (GDEDAENEESDEDDDQG). Residues 60–75 (KKKRKRKPKKKKKKGV) are compositionally biased toward basic residues. Position 200 (H200) interacts with substrate. The a divalent metal cation site is built by D220, D231, and H300. H308 contributes to the substrate binding site. Residues E336 and E431 each coordinate a divalent metal cation.

It belongs to the peptidase M24A family. Methionine aminopeptidase eukaryotic type 2 subfamily. Co(2+) serves as cofactor. Requires Zn(2+) as cofactor. The cofactor is Mn(2+). Fe(2+) is required as a cofactor.

It is found in the cytoplasm. The catalysed reaction is Release of N-terminal amino acids, preferentially methionine, from peptides and arylamides.. Functionally, cotranslationally removes the N-terminal methionine from nascent proteins. The N-terminal methionine is often cleaved when the second residue in the primary sequence is small and uncharged (Met-Ala-, Cys, Gly, Pro, Ser, Thr, or Val). The chain is Methionine aminopeptidase 2 from Uncinocarpus reesii (strain UAMH 1704).